The chain runs to 321 residues: Endoglucanase 1 (321 aa).

An N-terminal signal peptide occupies residues 1-27 (MSRKLRTLMAALCALPLAFAAAPPAHA). Residue Asp110 is part of the active site. A disulfide bridge links Cys112 with Cys156. The Proton donor role is filled by Asp149. Residue Asp295 is the Nucleophile of the active site.

It belongs to the glycosyl hydrolase 6 (cellulase B) family.

The catalysed reaction is Endohydrolysis of (1-&gt;4)-beta-D-glucosidic linkages in cellulose, lichenin and cereal beta-D-glucans.. Its function is as follows. Implicated in the mechanism of induction exerted by cellobiose. The polypeptide is Endoglucanase 1 (celA1) (Streptomyces halstedii).